The sequence spans 1407 residues: DNA-directed RNA polymerase subunit beta' (1407 aa).

Cys70, Cys72, Cys85, and Cys88 together coordinate Zn(2+). Residues Asp460, Asp462, and Asp464 each contribute to the Mg(2+) site. Residues Cys814, Cys888, Cys895, and Cys898 each contribute to the Zn(2+) site.

This sequence belongs to the RNA polymerase beta' chain family. As to quaternary structure, the RNAP catalytic core consists of 2 alpha, 1 beta, 1 beta' and 1 omega subunit. When a sigma factor is associated with the core the holoenzyme is formed, which can initiate transcription. Requires Mg(2+) as cofactor. Zn(2+) is required as a cofactor.

It carries out the reaction RNA(n) + a ribonucleoside 5'-triphosphate = RNA(n+1) + diphosphate. In terms of biological role, DNA-dependent RNA polymerase catalyzes the transcription of DNA into RNA using the four ribonucleoside triphosphates as substrates. This chain is DNA-directed RNA polymerase subunit beta', found in Salmonella choleraesuis (strain SC-B67).